A 130-amino-acid chain; its full sequence is Large ribosomal subunit protein bL12 (130 aa).

Belongs to the bacterial ribosomal protein bL12 family. As to quaternary structure, homodimer. Part of the ribosomal stalk of the 50S ribosomal subunit. Forms a multimeric L10(L12)X complex, where L10 forms an elongated spine to which 2 to 4 L12 dimers bind in a sequential fashion. Binds GTP-bound translation factors.

Forms part of the ribosomal stalk which helps the ribosome interact with GTP-bound translation factors. Is thus essential for accurate translation. The polypeptide is Large ribosomal subunit protein bL12 (Synechococcus sp. (strain WH7803)).